A 283-amino-acid polypeptide reads, in one-letter code: Formamidopyrimidine-DNA glycosylase (283 aa).

P2 functions as the Schiff-base intermediate with DNA in the catalytic mechanism. E3 serves as the catalytic Proton donor. K58 serves as the catalytic Proton donor; for beta-elimination activity. The DNA site is built by H100, R119, and K162. Residues 247-283 (RVYGREGQRCQTPDCAEKILRKVQSGRSSFYCPACQR) form an FPG-type zinc finger. Residue R273 is the Proton donor; for delta-elimination activity of the active site.

This sequence belongs to the FPG family. As to quaternary structure, monomer. Zn(2+) is required as a cofactor.

The enzyme catalyses Hydrolysis of DNA containing ring-opened 7-methylguanine residues, releasing 2,6-diamino-4-hydroxy-5-(N-methyl)formamidopyrimidine.. It catalyses the reaction 2'-deoxyribonucleotide-(2'-deoxyribose 5'-phosphate)-2'-deoxyribonucleotide-DNA = a 3'-end 2'-deoxyribonucleotide-(2,3-dehydro-2,3-deoxyribose 5'-phosphate)-DNA + a 5'-end 5'-phospho-2'-deoxyribonucleoside-DNA + H(+). In terms of biological role, involved in base excision repair of DNA damaged by oxidation or by mutagenic agents. Acts as a DNA glycosylase that recognizes and removes damaged bases. Has a preference for oxidized purines, such as 7,8-dihydro-8-oxoguanine (8-oxoG). Has AP (apurinic/apyrimidinic) lyase activity and introduces nicks in the DNA strand. Cleaves the DNA backbone by beta-delta elimination to generate a single-strand break at the site of the removed base with both 3'- and 5'-phosphates. This chain is Formamidopyrimidine-DNA glycosylase, found in Jannaschia sp. (strain CCS1).